A 1465-amino-acid polypeptide reads, in one-letter code: Protein clueless (1465 aa).

The disordered stretch occupies residues 1–87 (MALEIDAKNA…SNGHSENGDA (87 aa)). Residues 30 to 51 (HNNNNNAPAAGEKNLVNGSSAA) are compositionally biased toward low complexity. Positions 52–61 (TKKKGKKNRN) are enriched in basic residues. A Phosphoserine modification is found at Ser-273. The region spanning 427 to 669 (RAEDAFSSKL…RTFPPDVNFL (243 aa)) is the Clu domain. Basic and acidic residues predominate over residues 742–767 (AEKQEEPNEEQPEKTEEQPAEKEESK). 2 disordered regions span residues 742–776 (AEKQEEPNEEQPEKTEEQPAEKEESKPTPSETKSA) and 962–1021 (VSSD…SNSD). Positions 970–986 (KQPRNNSGKHNKHKAAK) are enriched in basic residues. Low complexity-rich tracts occupy residues 987–1003 (ASKPQAAAAQNGNATAA) and 1010–1020 (ATTSGATSSNS). TPR repeat units lie at residues 1114–1147 (AYNFYTTGQAKIQQGMLKEGYELISEALNLLNNV), 1240–1273 (ALIDSNISLILHALGEYELSLRFIEHALKLNLKY), and 1275–1308 (GNKAMHVAVSYHLMARIQSCMGDFRSALNNEKET). The segment at 1428–1465 (NNNDNASETEQPKDEASAAGTPTQLTNGSEESTATVSS) is disordered. The segment covering 1447-1465 (GTPTQLTNGSEESTATVSS) has biased composition (polar residues).

The protein belongs to the CLU family.

The protein localises to the cytoplasm. Its function is as follows. mRNA-binding protein involved in proper cytoplasmic distribution of mitochondria. This Drosophila virilis (Fruit fly) protein is Protein clueless.